A 169-amino-acid polypeptide reads, in one-letter code: Shikimate kinase (169 aa).

12 to 17 (GAGKST) contacts ATP. Position 16 (Ser-16) interacts with Mg(2+). Asp-34, Arg-58, and Gly-80 together coordinate substrate. Residue Arg-117 participates in ATP binding. Substrate is bound at residue Arg-136.

The protein belongs to the shikimate kinase family. In terms of assembly, monomer. Mg(2+) serves as cofactor.

The protein localises to the cytoplasm. It catalyses the reaction shikimate + ATP = 3-phosphoshikimate + ADP + H(+). The protein operates within metabolic intermediate biosynthesis; chorismate biosynthesis; chorismate from D-erythrose 4-phosphate and phosphoenolpyruvate: step 5/7. Its function is as follows. Catalyzes the specific phosphorylation of the 3-hydroxyl group of shikimic acid using ATP as a cosubstrate. This chain is Shikimate kinase, found in Rhodococcus erythropolis (strain PR4 / NBRC 100887).